Consider the following 503-residue polypeptide: REST corepressor 2 (503 aa).

The interval 1 to 62 (MPSVMEKSHG…IPECKPDNTS (62 aa)) is disordered. Residues 41 to 126 (SMIRVGSDYQ…RSLADLANFT (86 aa)) enclose the ELM2 domain. The SANT 1 domain occupies 127–178 (PFPEEWSVEDKVLFEQAFSFHGKSFQRIQQMLPEKLIPSLVKYYYSWKKTRS). Coiled-coil stretches lie at residues 182-206 (VMDR…DQIK) and 286-314 (QLET…SLEG). The SANT 2 domain maps to 327–378 (KLNARWTTDEQLLAVQAVRKYGKDFQAISEVLGNKTPSQVKTFFISYRRRFN). Residues 385–503 (EWEAEQEPSP…VGSHAESTFS (119 aa)) form a disordered region. Polar residues predominate over residues 399-412 (TDMSNKTSGSSQTP). The segment covering 423–442 (SVSSSSQPAPPAAAAAASLS) has biased composition (low complexity).

Belongs to the CoREST family.

It is found in the nucleus. Its function is as follows. May act as a component of a corepressor complex that represses transcription. The sequence is that of REST corepressor 2 (rcor2) from Xenopus laevis (African clawed frog).